The primary structure comprises 91 residues: Putative membrane protein insertion efficiency factor (91 aa).

Residues 66–91 (GGVDPVPSCGCHSDKETTPKEKSDNA) are disordered. Positions 77 to 91 (HSDKETTPKEKSDNA) are enriched in basic and acidic residues.

It belongs to the UPF0161 family.

Its subcellular location is the cell inner membrane. Its function is as follows. Could be involved in insertion of integral membrane proteins into the membrane. In Hydrogenovibrio crunogenus (strain DSM 25203 / XCL-2) (Thiomicrospira crunogena), this protein is Putative membrane protein insertion efficiency factor.